The primary structure comprises 244 residues: Ribonuclease HII (244 aa).

The 192-residue stretch at 31-222 (RLIAGVDEAG…VRLALQGREG (192 aa)) folds into the RNase H type-2 domain. The a divalent metal cation site is built by D37, E38, and D130.

The protein belongs to the RNase HII family. The cofactor is Mn(2+). It depends on Mg(2+) as a cofactor.

Its subcellular location is the cytoplasm. The enzyme catalyses Endonucleolytic cleavage to 5'-phosphomonoester.. Functionally, endonuclease that specifically degrades the RNA of RNA-DNA hybrids. This Xanthomonas axonopodis pv. citri (strain 306) protein is Ribonuclease HII.